The chain runs to 539 residues: Phenylalanine--tRNA ligase beta subunit (539 aa).

Positions 271 to 347 (LSPARWTVTT…KSYGYENLKA (77 aa)) constitute a B5 domain. 4 residues coordinate Mg(2+): D325, D331, E334, and D335.

Belongs to the phenylalanyl-tRNA synthetase beta subunit family. Type 2 subfamily. Tetramer of two alpha and two beta subunits. The cofactor is Mg(2+).

The protein localises to the cytoplasm. It carries out the reaction tRNA(Phe) + L-phenylalanine + ATP = L-phenylalanyl-tRNA(Phe) + AMP + diphosphate + H(+). This Methanothrix thermoacetophila (strain DSM 6194 / JCM 14653 / NBRC 101360 / PT) (Methanosaeta thermophila) protein is Phenylalanine--tRNA ligase beta subunit.